The chain runs to 336 residues: MTTNRKDEHILYALEQKSSYNSFDEVELIHSSLPLYNLDEIDLSTEFAGRKWDFPFYINAMTGGSNKGREINQKLAQVAESCGILFVTGSYSAALKNPTDDSFSVKSSHPNLLLGTNIGLDKPVELGLQTVEEMNPVLLQVHVNVMQELLMPEGERKFRSWQSHLADYSKQIPVPIVLKEVGFGMDAKTIERAYEFGVRTVDLSGRGGTSFAYIENRRSGQRDYLNQWGQSTMQALLNAQEWKDKVELLVSGGVRNPLDMIKCLVFGAKAVGLSRTVLELVETYTVEEVIGIVQGWKADLRLIMCSLNCATIADLQKVDYLLYGKLKEAKDQMKKA.

A substrate-binding site is contributed by 5–6; it reads RK. FMN is bound by residues 60 to 62, S90, and N117; that span reads AMT. Q147 provides a ligand contact to substrate. E148 is a binding site for Mg(2+). FMN-binding positions include K179, S204, T209, 253-255, and 274-275; these read GVR and SR.

The protein belongs to the IPP isomerase type 2 family. As to quaternary structure, homooctamer. Dimer of tetramers. It depends on FMN as a cofactor. The cofactor is NADPH. Mg(2+) serves as cofactor.

The protein resides in the cytoplasm. The catalysed reaction is isopentenyl diphosphate = dimethylallyl diphosphate. Involved in the biosynthesis of isoprenoids. Catalyzes the 1,3-allylic rearrangement of the homoallylic substrate isopentenyl (IPP) to its allylic isomer, dimethylallyl diphosphate (DMAPP). The sequence is that of Isopentenyl-diphosphate delta-isomerase from Streptococcus pneumoniae serotype 4 (strain ATCC BAA-334 / TIGR4).